The chain runs to 413 residues: Arginine biosynthesis bifunctional protein ArgJ (413 aa).

Substrate is bound by residues threonine 158, lysine 184, threonine 195, glutamate 285, asparagine 408, and serine 413. The active-site Nucleophile is the threonine 195.

This sequence belongs to the ArgJ family. As to quaternary structure, heterotetramer of two alpha and two beta chains.

The protein localises to the cytoplasm. The enzyme catalyses N(2)-acetyl-L-ornithine + L-glutamate = N-acetyl-L-glutamate + L-ornithine. It carries out the reaction L-glutamate + acetyl-CoA = N-acetyl-L-glutamate + CoA + H(+). It functions in the pathway amino-acid biosynthesis; L-arginine biosynthesis; L-ornithine and N-acetyl-L-glutamate from L-glutamate and N(2)-acetyl-L-ornithine (cyclic): step 1/1. It participates in amino-acid biosynthesis; L-arginine biosynthesis; N(2)-acetyl-L-ornithine from L-glutamate: step 1/4. In terms of biological role, catalyzes two activities which are involved in the cyclic version of arginine biosynthesis: the synthesis of N-acetylglutamate from glutamate and acetyl-CoA as the acetyl donor, and of ornithine by transacetylation between N(2)-acetylornithine and glutamate. The protein is Arginine biosynthesis bifunctional protein ArgJ of Brucella melitensis biotype 1 (strain ATCC 23456 / CCUG 17765 / NCTC 10094 / 16M).